The primary structure comprises 97 residues: Antitoxin TacA2 (97 aa).

It belongs to the TacA antitoxin family. As to quaternary structure, homodimer. Forms a complex with cognate toxin TacT2.

Functionally, antitoxin component of a type II toxin-antitoxin (TA) system. Counteracts the toxic effect of cognate toxin TacT2. Its function is as follows. The TacA2-TacT2 complex both represses and derepresses expression of its own operon. The protein is Antitoxin TacA2 of Salmonella enteritidis.